The primary structure comprises 95 residues: Aspartyl/glutamyl-tRNA(Asn/Gln) amidotransferase subunit C (95 aa).

It belongs to the GatC family. In terms of assembly, heterotrimer of A, B and C subunits.

The catalysed reaction is L-glutamyl-tRNA(Gln) + L-glutamine + ATP + H2O = L-glutaminyl-tRNA(Gln) + L-glutamate + ADP + phosphate + H(+). The enzyme catalyses L-aspartyl-tRNA(Asn) + L-glutamine + ATP + H2O = L-asparaginyl-tRNA(Asn) + L-glutamate + ADP + phosphate + 2 H(+). Functionally, allows the formation of correctly charged Asn-tRNA(Asn) or Gln-tRNA(Gln) through the transamidation of misacylated Asp-tRNA(Asn) or Glu-tRNA(Gln) in organisms which lack either or both of asparaginyl-tRNA or glutaminyl-tRNA synthetases. The reaction takes place in the presence of glutamine and ATP through an activated phospho-Asp-tRNA(Asn) or phospho-Glu-tRNA(Gln). This is Aspartyl/glutamyl-tRNA(Asn/Gln) amidotransferase subunit C from Chlorobaculum parvum (strain DSM 263 / NCIMB 8327) (Chlorobium vibrioforme subsp. thiosulfatophilum).